The sequence spans 291 residues: Lipoyl synthase (291 aa).

7 residues coordinate [4Fe-4S] cluster: Cys-35, Cys-40, Cys-46, Cys-61, Cys-65, Cys-68, and Ser-273. Residues Phe-47–Glu-262 form the Radical SAM core domain.

Belongs to the radical SAM superfamily. Lipoyl synthase family. [4Fe-4S] cluster is required as a cofactor.

The protein localises to the cytoplasm. It catalyses the reaction [[Fe-S] cluster scaffold protein carrying a second [4Fe-4S](2+) cluster] + N(6)-octanoyl-L-lysyl-[protein] + 2 oxidized [2Fe-2S]-[ferredoxin] + 2 S-adenosyl-L-methionine + 4 H(+) = [[Fe-S] cluster scaffold protein] + N(6)-[(R)-dihydrolipoyl]-L-lysyl-[protein] + 4 Fe(3+) + 2 hydrogen sulfide + 2 5'-deoxyadenosine + 2 L-methionine + 2 reduced [2Fe-2S]-[ferredoxin]. It participates in protein modification; protein lipoylation via endogenous pathway; protein N(6)-(lipoyl)lysine from octanoyl-[acyl-carrier-protein]: step 2/2. Its function is as follows. Catalyzes the radical-mediated insertion of two sulfur atoms into the C-6 and C-8 positions of the octanoyl moiety bound to the lipoyl domains of lipoate-dependent enzymes, thereby converting the octanoylated domains into lipoylated derivatives. The polypeptide is Lipoyl synthase (Geobacter sp. (strain M21)).